The following is a 323-amino-acid chain: Elongation factor P--(R)-beta-lysine ligase (323 aa).

76–78 (SPE) is a binding site for substrate. ATP contacts are provided by residues 100-102 (RNE) and asparagine 109. Substrate is bound at residue tyrosine 118. 242–243 (EL) lines the ATP pocket. Glutamate 249 contributes to the substrate binding site. Position 298 (glycine 298) interacts with ATP.

It belongs to the class-II aminoacyl-tRNA synthetase family. EpmA subfamily. Homodimer.

It carries out the reaction D-beta-lysine + L-lysyl-[protein] + ATP = N(6)-((3R)-3,6-diaminohexanoyl)-L-lysyl-[protein] + AMP + diphosphate + H(+). With EpmB is involved in the beta-lysylation step of the post-translational modification of translation elongation factor P (EF-P). Catalyzes the ATP-dependent activation of (R)-beta-lysine produced by EpmB, forming a lysyl-adenylate, from which the beta-lysyl moiety is then transferred to the epsilon-amino group of a conserved specific lysine residue in EF-P. This Histophilus somni (strain 129Pt) (Haemophilus somnus) protein is Elongation factor P--(R)-beta-lysine ligase.